The chain runs to 594 residues: Glutamate decarboxylase 1 (594 aa).

Residues M1–S13 are compositionally biased toward low complexity. A disordered region spans residues M1–A22. S78 is subject to Phosphoserine. Q190–S192 provides a ligand contact to 4-aminobutanoate. Position 405 is an N6-(pyridoxal phosphate)lysine (K405). R567 is a binding site for 4-aminobutanoate.

This sequence belongs to the group II decarboxylase family. Homodimer. The cofactor is pyridoxal 5'-phosphate.

It catalyses the reaction L-glutamate + H(+) = 4-aminobutanoate + CO2. Its function is as follows. Catalyzes the synthesis of the inhibitory neurotransmitter gamma-aminobutyric acid (GABA) with pyridoxal 5'-phosphate as cofactor. This is Glutamate decarboxylase 1 (GAD1) from Canis lupus familiaris (Dog).